A 306-amino-acid chain; its full sequence is 3-methyl-2-oxobutanoate hydroxymethyltransferase (306 aa).

Asp53 and Asp96 together coordinate Mg(2+). 3-methyl-2-oxobutanoate contacts are provided by residues 53 to 54, Asp96, and Lys126; that span reads DS. Glu128 provides a ligand contact to Mg(2+). Glu195 serves as the catalytic Proton acceptor.

This sequence belongs to the PanB family. As to quaternary structure, homodecamer; pentamer of dimers. Mg(2+) serves as cofactor.

The protein resides in the cytoplasm. The enzyme catalyses 3-methyl-2-oxobutanoate + (6R)-5,10-methylene-5,6,7,8-tetrahydrofolate + H2O = 2-dehydropantoate + (6S)-5,6,7,8-tetrahydrofolate. It functions in the pathway cofactor biosynthesis; (R)-pantothenate biosynthesis; (R)-pantoate from 3-methyl-2-oxobutanoate: step 1/2. In terms of biological role, catalyzes the reversible reaction in which hydroxymethyl group from 5,10-methylenetetrahydrofolate is transferred onto alpha-ketoisovalerate to form ketopantoate. The polypeptide is 3-methyl-2-oxobutanoate hydroxymethyltransferase (Anaeromyxobacter sp. (strain K)).